The primary structure comprises 464 residues: 3-isopropylmalate dehydratase large subunit (464 aa).

Residues Cys-337, Cys-397, and Cys-400 each contribute to the [4Fe-4S] cluster site.

The protein belongs to the aconitase/IPM isomerase family. LeuC type 1 subfamily. In terms of assembly, heterodimer of LeuC and LeuD. It depends on [4Fe-4S] cluster as a cofactor.

It catalyses the reaction (2R,3S)-3-isopropylmalate = (2S)-2-isopropylmalate. The protein operates within amino-acid biosynthesis; L-leucine biosynthesis; L-leucine from 3-methyl-2-oxobutanoate: step 2/4. In terms of biological role, catalyzes the isomerization between 2-isopropylmalate and 3-isopropylmalate, via the formation of 2-isopropylmaleate. This chain is 3-isopropylmalate dehydratase large subunit, found in Bacillus cereus (strain ATCC 10987 / NRS 248).